The sequence spans 548 residues: Chaperonin GroEL 2 (548 aa).

ATP is bound by residues 30 to 33, Lys-51, 87 to 91, Gly-415, 479 to 481, and Asp-495; these read TLGP, DGTTT, and NAA. Residues 524–548 are disordered; it reads APKDAPPTAPAGVPGAGAGGPGFDF. Residues 537-548 are compositionally biased toward gly residues; that stretch reads PGAGAGGPGFDF.

This sequence belongs to the chaperonin (HSP60) family. As to quaternary structure, forms a cylinder of 14 subunits composed of two heptameric rings stacked back-to-back. Interacts with the co-chaperonin GroES.

Its subcellular location is the cytoplasm. It carries out the reaction ATP + H2O + a folded polypeptide = ADP + phosphate + an unfolded polypeptide.. Its function is as follows. Together with its co-chaperonin GroES, plays an essential role in assisting protein folding. The GroEL-GroES system forms a nano-cage that allows encapsulation of the non-native substrate proteins and provides a physical environment optimized to promote and accelerate protein folding. This chain is Chaperonin GroEL 2, found in Burkholderia pseudomallei (strain 668).